Consider the following 1254-residue polypeptide: MKVIFATIWLIAGAWSQSAEQLGCIWYGQSHMIGAHWVNKGDTNPARPLNSPTSEAIFAKRCPMLYKEYKGESGEDELSLCCDAAQIETMESGLSQADGVFSRCPTCTRNMALTVCAMTCAKNHTLFLTAYNDTNDAGVDYVKYIDYRLTDDTVSKIYNSCIGIQHTQTGRPAMDLGCGSYNAKTCNYRRWYEFMGDVSGDYVPFQINYKWSEDAEEGSNEIYLDLSPLKCGESYEDSYACACIDCEESCPLTDAPTGPDELWKIAGLYGVTFILALIIACALSFFIFWGAFGKTSAPSVCMPTLFGEFFYHGFRIWGTFCAKHPVIVLALCSWAIAGLSFGIRYMTITTDPVELWAGEESQTRIEKDYFDQHFGPFYRTNQMFVKAVNQTYFTHETSNGVLNFGPAFEYNFLKEVFELQDSIMKLGMADNEGLDKICYAPVLMAGETPTVDRCAIQSVYGYFQHDMDRFENSYVDSNNYTINYLNQLEDCLRVPMMEDCFGTFGGPIEPGIAVGGMPKVAVGEDPDYMLATGLVLTFLGRNYNDESKLEPNMKWEKLFVDFLRDYKSDRLDIAYMAERSIQDAIVELSEGEVSTVVISYVVMFVYVAIALGHIRSCRGFLRESRIMLAIGGIVIVLASVVCSLGFWGYLDVTTTMLAIEVIPFLVLAVGVDNIFIMVHTYQRLDHSKFKTTHEAIGEAIGQVGPSILQTAGSEMACFAIGCISDMPAVKTFAMYAAIAILLDFLLQITAFVALMAIDEKRYLDGRLDMLCCVKSGGKKINDEDGDGVDRPKEVGLLETLFKNFYSPFLLSKPVKVSVLLIFTVITCLSLMVTPSIEKGLDQEMSMPKNSHVVKYFRYMVDLLAMGAPVYWVLKPGLNYSEPLQQNLICGGVECNNNSLSVQLYTQAQYPEITSLARPASSWLDDYIDWLAISDCCKYNVTTGGFCSSNSKSEDCLPCERGFTENGLRPDAETFNKYIPYFLFDLPDAECAKAGRASYADAVIYTIDDVGMSTVQDSYFMQYSTTSTTSEEFYSQLREVRRISGEINAMFKENNVDAEIFAYCVFYIYYEQYLTIWGDAMFSLGMSLVAIFLVTLLITGLDITSTFIVLFMVICILINMLGMMWAWSINLNAISLVNLVVCVGIGVEFVAHIVRSFKRAEGTAQERARHSLNVTGSSVLSGITLTKFAGIVVLGFSNSQIFQVFYFRMYLGIVLIGAAHGLILLPVLLSLLGPPQKLARSSGAEPTASITITTN.

Positions 1–16 (MKVIFATIWLIAGAWS) are cleaved as a signal peptide. The Extracellular segment spans residues 17-272 (QSAEQLGCIW…WKIAGLYGVT (256 aa)). Disulfide bonds link C24/C81, C62/C116, C82/C120, C104/C241, C107/C161, C178/C186, C231/C246, and C243/C250. 2 N-linked (GlcNAc...) asparagine glycosylation sites follow: N123 and N132. Residues 273-293 (FILALIIACALSFFIFWGAFG) traverse the membrane as a helical segment. At 294–325 (KTSAPSVCMPTLFGEFFYHGFRIWGTFCAKHP) the chain is on the cytoplasmic side. Residues 326–346 (VIVLALCSWAIAGLSFGIRYM) traverse the membrane as a helical segment. The Extracellular portion of the chain corresponds to 347 to 593 (TITTDPVELW…AIVELSEGEV (247 aa)). Residue N389 is glycosylated (N-linked (GlcNAc...) asparagine). C438 and C454 form a disulfide bridge. N479 carries N-linked (GlcNAc...) asparagine glycosylation. A disulfide bridge connects residues C491 and C500. Residues 592–757 (EVSTVVISYV…ITAFVALMAI (166 aa)) enclose the SSD domain. A helical membrane pass occupies residues 594–614 (STVVISYVVMFVYVAIALGHI). Topologically, residues 615-625 (RSCRGFLRESR) are cytoplasmic. A helical membrane pass occupies residues 626–646 (IMLAIGGIVIVLASVVCSLGF). The Extracellular portion of the chain corresponds to 647 to 657 (WGYLDVTTTML). Residues 658–678 (AIEVIPFLVLAVGVDNIFIMV) form a helical membrane-spanning segment. The Cytoplasmic segment spans residues 679–736 (HTYQRLDHSKFKTTHEAIGEAIGQVGPSILQTAGSEMACFAIGCISDMPAVKTFAMYA). The helical transmembrane segment at 737–757 (AIAILLDFLLQITAFVALMAI) threads the bilayer. The Extracellular portion of the chain corresponds to 758–815 (DEKRYLDGRLDMLCCVKSGGKKINDEDGDGVDRPKEVGLLETLFKNFYSPFLLSKPVK). The helical transmembrane segment at 816 to 836 (VSVLLIFTVITCLSLMVTPSI) threads the bilayer. At 837–857 (EKGLDQEMSMPKNSHVVKYFR) the chain is on the cytoplasmic side. Residues 858–878 (YMVDLLAMGAPVYWVLKPGLN) form a helical membrane-spanning segment. Over 879–1079 (YSEPLQQNLI…EQYLTIWGDA (201 aa)) the chain is Extracellular. An intrachain disulfide couples C889 to C894. Residues N896 and N939 are each glycosylated (N-linked (GlcNAc...) asparagine). 3 cysteine pairs are disulfide-bonded: C935-C990, C936-C958, and C946-C955. A helical membrane pass occupies residues 1080–1100 (MFSLGMSLVAIFLVTLLITGL). The Cytoplasmic segment spans residues 1101–1105 (DITST). A helical membrane pass occupies residues 1106–1126 (FIVLFMVICILINMLGMMWAW). Residues 1127–1132 (SINLNA) lie on the Extracellular side of the membrane. A helical membrane pass occupies residues 1133–1153 (ISLVNLVVCVGIGVEFVAHIV). The Cytoplasmic portion of the chain corresponds to 1154–1174 (RSFKRAEGTAQERARHSLNVT). The chain crosses the membrane as a helical span at residues 1175 to 1195 (GSSVLSGITLTKFAGIVVLGF). Topologically, residues 1196-1207 (SNSQIFQVFYFR) are extracellular. A helical membrane pass occupies residues 1208-1228 (MYLGIVLIGAAHGLILLPVLL). Residues 1229-1254 (SLLGPPQKLARSSGAEPTASITITTN) are Cytoplasmic-facing.

It belongs to the patched family. In terms of tissue distribution, expressed in the midgut.

It is found in the cell membrane. The enzyme catalyses cholesterol(in) = cholesterol(out). Its function is as follows. Important for cholesterol absorption at the midgut epithelium. Acts only in the early steps of sterol absorption, prior to Npc1a-dependent intracellular sterol trafficking. The sequence is that of NPC intracellular cholesterol transporter 1 homolog 1b from Drosophila melanogaster (Fruit fly).